The chain runs to 161 residues: Phosphopantetheine adenylyltransferase (161 aa).

Thr-9 contacts substrate. ATP is bound by residues 9–10 (TF) and His-17. Positions 41, 73, and 87 each coordinate substrate. ATP-binding positions include 88–90 (GLR), Glu-98, and 123–129 (YQFISGT).

The protein belongs to the bacterial CoaD family. Homohexamer. The cofactor is Mg(2+).

It is found in the cytoplasm. It catalyses the reaction (R)-4'-phosphopantetheine + ATP + H(+) = 3'-dephospho-CoA + diphosphate. It functions in the pathway cofactor biosynthesis; coenzyme A biosynthesis; CoA from (R)-pantothenate: step 4/5. In terms of biological role, reversibly transfers an adenylyl group from ATP to 4'-phosphopantetheine, yielding dephospho-CoA (dPCoA) and pyrophosphate. The protein is Phosphopantetheine adenylyltransferase of Cupriavidus pinatubonensis (strain JMP 134 / LMG 1197) (Cupriavidus necator (strain JMP 134)).